Here is a 187-residue protein sequence, read N- to C-terminus: Transmembrane protein 212 (187 aa).

The next 5 helical transmembrane spans lie at 11–31 (TLVTLGGLSIFSGAIAFFPVF), 42–62 (VWIACPIWNGALAVTAGSLVL), 76–96 (AVFTFVILSILGCPLHFTVAL), 106–126 (FYSFSGVAGTNYLGYVVTFPF), and 148–168 (LQVLDLCLSLILFCVSLAVFI).

Its subcellular location is the membrane. This chain is Transmembrane protein 212 (Tmem212), found in Mus musculus (Mouse).